The chain runs to 102 residues: MYAIIKTGGKQIKVEAGQEIYIEKLDADVEGTVEFGEVLFVGGDDVKVGAPLVEGAKVVGTVVKHGRAKKITVFKMKAKKNYRRKQGHRQPYTKVRIEKIEA.

It belongs to the bacterial ribosomal protein bL21 family. In terms of assembly, part of the 50S ribosomal subunit. Contacts protein L20.

Functionally, this protein binds to 23S rRNA in the presence of protein L20. The sequence is that of Large ribosomal subunit protein bL21 from Exiguobacterium sp. (strain ATCC BAA-1283 / AT1b).